The following is a 415-amino-acid chain: uncharacterized protein (415 aa).

10 helical membrane-spanning segments follow: residues M20–L40, L43–A63, I78–I98, L109–F129, V155–S175, I243–I263, I300–F320, G328–I348, I360–V380, and G388–L408.

Belongs to the polysaccharide synthase family.

The protein resides in the cell membrane. This is an uncharacterized protein from Methanocaldococcus jannaschii (strain ATCC 43067 / DSM 2661 / JAL-1 / JCM 10045 / NBRC 100440) (Methanococcus jannaschii).